Consider the following 491-residue polypeptide: LETM1 domain-containing protein LETM2, mitochondrial (491 aa).

The N-terminal 25 residues, 1 to 25, are a transit peptide targeting the mitochondrion; it reads MAFYSYNSVLAIARTRFPSHFVHPT. Residues 26–177 are Mitochondrial intermembrane-facing; that stretch reads CSSYSPSCAF…LLRTCVDFFR (152 aa). Residues 94–109 are compositionally biased toward polar residues; the sequence is EQATKHPQVTSPQATK. The segment at 94-115 is disordered; it reads EQATKHPQVTSPQATKETGMEI. A helical membrane pass occupies residues 178 to 198; the sequence is LVPFMVFLIVPFMEFLLPVFL. The Mitochondrial matrix segment spans residues 199–491; that stretch reads KLFPEMLPST…QNSKASSKGA (293 aa). The stretch at 208–235 forms a coiled coil; the sequence is TFESESKKEEKQKKKMAVKLELAKFLQE. Positions 221-438 constitute a Letm1 RBD domain; it reads KKMAVKLELA…LAPQLKGTKD (218 aa). The segment at 435–491 is disordered; sequence GTKDEDFIQPPPVTSSPITPSTPISLPKGPITSSEEPTLQAKSQMTAQNSKASSKGA. Positions 449–461 are enriched in low complexity; that stretch reads SSPITPSTPISLP. Over residues 465-491 the composition is skewed to polar residues; that stretch reads ITSSEEPTLQAKSQMTAQNSKASSKGA.

It is found in the mitochondrion inner membrane. This chain is LETM1 domain-containing protein LETM2, mitochondrial (LETM2), found in Homo sapiens (Human).